The primary structure comprises 242 residues: tRNA uridine(34) hydroxylase (242 aa).

Residues 128–222 enclose the Rhodanese domain; the sequence is DGREVVMLDT…YFEETGGPGY (95 aa). The Cysteine persulfide intermediate role is filled by Cys-182.

Belongs to the TrhO family.

It carries out the reaction uridine(34) in tRNA + AH2 + O2 = 5-hydroxyuridine(34) in tRNA + A + H2O. Its function is as follows. Catalyzes oxygen-dependent 5-hydroxyuridine (ho5U) modification at position 34 in tRNAs. The protein is tRNA uridine(34) hydroxylase of Bordetella avium (strain 197N).